We begin with the raw amino-acid sequence, 257 residues long: Nickel import system ATP-binding protein NikD (257 aa).

The region spanning 4–245 is the ABC transporter domain; sequence IDIQNLTIKN…HLHPYTERLI (242 aa). ATP is bound at residue 37–44; sequence GESGAGKS.

The protein belongs to the ABC transporter superfamily. In terms of assembly, the complex is composed of two ATP-binding proteins (NikD and NikE), two transmembrane proteins (NikB and NikC) and a solute-binding protein (NikA).

It is found in the cell membrane. It catalyses the reaction Ni(2+)(out) + ATP + H2O = Ni(2+)(in) + ADP + phosphate + H(+). Functionally, part of the ABC transporter complex NikABCDE (Opp2) involved in nickel import. Probably responsible for energy coupling to the transport system. The sequence is that of Nickel import system ATP-binding protein NikD from Staphylococcus aureus (strain MRSA252).